Here is a 458-residue protein sequence, read N- to C-terminus: UDP-N-acetylmuramate--L-alanine ligase (458 aa).

ATP is bound at residue 115–121 (GSHGKTT).

This sequence belongs to the MurCDEF family.

The protein resides in the cytoplasm. It catalyses the reaction UDP-N-acetyl-alpha-D-muramate + L-alanine + ATP = UDP-N-acetyl-alpha-D-muramoyl-L-alanine + ADP + phosphate + H(+). It functions in the pathway cell wall biogenesis; peptidoglycan biosynthesis. Its function is as follows. Cell wall formation. The chain is UDP-N-acetylmuramate--L-alanine ligase from Anaeromyxobacter sp. (strain Fw109-5).